The primary structure comprises 223 residues: Cutinase (223 aa).

Positions 1–19 (MKFFAFSMLIGEASPIVLA) are cleaved as a signal peptide. A disulfide bridge links Cys-46 with Cys-124. Ser-135 acts as the Nucleophile in catalysis. A disulfide bridge links Cys-185 with Cys-192. Asp-189 is a catalytic residue. The active-site Proton donor/acceptor is His-202.

Belongs to the cutinase family. Post-translationally, the 2 disulfide bonds play a critical role in holding the catalytic residues in juxta-position; reduction of the disulfide bridges results in the complete inactivation of the enzyme.

It localises to the secreted. It catalyses the reaction cutin + H2O = cutin monomers.. Its function is as follows. Catalyzes the hydrolysis of complex carboxylic polyesters found in the cell wall of plants. Degrades cutin, a macromolecule that forms the structure of the plant cuticle. Allows pathogenic fungi to penetrate through the cuticular barrier into the host plant during the initial stage of fungal infection. The sequence is that of Cutinase (CUT) from Didymella rabiei (Chickpea ascochyta blight fungus).